Reading from the N-terminus, the 203-residue chain is Thymidylate kinase (203 aa).

An ATP-binding site is contributed by 10-17 (GIDGAGKS).

The protein belongs to the thymidylate kinase family.

The enzyme catalyses dTMP + ATP = dTDP + ADP. Phosphorylation of dTMP to form dTDP in both de novo and salvage pathways of dTTP synthesis. This is Thymidylate kinase from Cupriavidus necator (strain ATCC 17699 / DSM 428 / KCTC 22496 / NCIMB 10442 / H16 / Stanier 337) (Ralstonia eutropha).